A 121-amino-acid polypeptide reads, in one-letter code: Large ribosomal subunit protein uL18 (121 aa).

Belongs to the universal ribosomal protein uL18 family. In terms of assembly, part of the 50S ribosomal subunit; part of the 5S rRNA/L5/L18/L25 subcomplex. Contacts the 5S and 23S rRNAs.

Functionally, this is one of the proteins that bind and probably mediate the attachment of the 5S RNA into the large ribosomal subunit, where it forms part of the central protuberance. This Ehrlichia chaffeensis (strain ATCC CRL-10679 / Arkansas) protein is Large ribosomal subunit protein uL18.